A 231-amino-acid polypeptide reads, in one-letter code: Acyl-protein thioesterase 2 (231 aa).

Cysteine 2 carries the S-palmitoyl cysteine lipid modification. Residue serine 82 is modified to Phosphoserine. Active-site charge relay system residues include serine 122, aspartate 176, and histidine 210.

Belongs to the AB hydrolase superfamily. AB hydrolase 2 family. Expressed in various breast cancer cell lines.

Its subcellular location is the cytoplasm. The enzyme catalyses S-hexadecanoyl-L-cysteinyl-[protein] + H2O = L-cysteinyl-[protein] + hexadecanoate + H(+). The catalysed reaction is prostaglandin E2 1-glyceryl ester + H2O = prostaglandin E2 + glycerol + H(+). It carries out the reaction 1-hexadecanoyl-sn-glycero-3-phosphocholine + H2O = sn-glycerol 3-phosphocholine + hexadecanoate + H(+). It catalyses the reaction 1-octadecanoyl-sn-glycero-3-phosphocholine + H2O = octadecanoate + sn-glycerol 3-phosphocholine + H(+). The enzyme catalyses 1-hexadecanoyl-sn-glycero-3-phosphate + H2O = sn-glycerol 3-phosphate + hexadecanoate + H(+). The catalysed reaction is 1-hexadecanoyl-sn-glycero-3-phospho-L-serine + H2O = sn-glycero-3-phospho-L-serine + hexadecanoate + H(+). Inhibited by compound 1 or (5,5-Dioxido-4H-thieno[3,2-c]thiochromen-2-yl)(4-(4-methoxyphenyl)piperazin-1-yl)methanone. Its function is as follows. Acts as an acyl-protein thioesterase hydrolyzing fatty acids from S-acylated cysteine residues in proteins such as trimeric G alpha proteins, GSDMD, GAP43, ZDHHC6 or HRAS. Deacylates GAP43. Mediates depalmitoylation of ZDHHC6. Has lysophospholipase activity. Hydrolyzes prostaglandin glycerol esters (PG-Gs) in the following order prostaglandin D2-glycerol ester (PGD2-G) &gt; prostaglandin E2 glycerol ester (PGE2-G) &gt; prostaglandin F2-alpha-glycerol ester (PGF2-alpha-G). Hydrolyzes 1-arachidonoylglycerol but not 2-arachidonoylglycerol or arachidonoylethanolamide. The chain is Acyl-protein thioesterase 2 (LYPLA2) from Homo sapiens (Human).